Here is a 219-residue protein sequence, read N- to C-terminus: Deoxyribose-phosphate aldolase (219 aa).

Catalysis depends on D92, which acts as the Proton donor/acceptor. Residue K154 is the Schiff-base intermediate with acetaldehyde of the active site. The active-site Proton donor/acceptor is the K183.

Belongs to the DeoC/FbaB aldolase family. DeoC type 1 subfamily.

The protein localises to the cytoplasm. It carries out the reaction 2-deoxy-D-ribose 5-phosphate = D-glyceraldehyde 3-phosphate + acetaldehyde. It functions in the pathway carbohydrate degradation; 2-deoxy-D-ribose 1-phosphate degradation; D-glyceraldehyde 3-phosphate and acetaldehyde from 2-deoxy-alpha-D-ribose 1-phosphate: step 2/2. Its function is as follows. Catalyzes a reversible aldol reaction between acetaldehyde and D-glyceraldehyde 3-phosphate to generate 2-deoxy-D-ribose 5-phosphate. The chain is Deoxyribose-phosphate aldolase from Dictyoglomus turgidum (strain DSM 6724 / Z-1310).